The following is a 230-amino-acid chain: MSSALEELQKDLEEVKVLLEKATRKRVRDALTAEKSKIETEMKNKMQQKSQRKAELTENEKPAAVVAPITTGYTVKISNYGWDQSDKFVKIYITLPGVHQVPAESVQVNFTERSFDLLVKNLNGKSYSMIVNNLLKPISVEGSSKKVKTDTVLILCRKKAENTRWDYLTQVEKECKEKEKPSYDTETDPSEGLMNVLKKIYEDGDDDMKRTINKAWVESREKQAKGDTDF.

The interaction with SIAH1 stretch occupies residues 1–82 (MSSALEELQK…YTVKISNYGW (82 aa)). A Phosphoserine modification is found at Ser-3. N6-acetyllysine is present on residues Lys-10 and Lys-21. Ser-36 is modified (phosphoserine). The segment at 38–59 (IETEMKNKMQQKSQRKAELTEN) is disordered. The region spanning 75 to 169 (VKISNYGWDQ…AENTRWDYLT (95 aa)) is the CS domain. The segment at 75-230 (VKISNYGWDQ…EKQAKGDTDF (156 aa)) is interaction with SKP1. N6-acetyllysine is present on residues Lys-87 and Lys-120. The segment at 156-230 (CRKKAENTRW…EKQAKGDTDF (75 aa)) is interaction with S100A6. Residues 170–230 (QVEKECKEKE…EKQAKGDTDF (61 aa)) form the SGS domain.

Monomer or homodimer. Component of some large E3 complex at least composed of UBE2D1, SIAH1, CACYBP/SIP, SKP1, APC and TBL1X. Interacts directly with SIAH1, SIAH2 and SKP1. Interacts with proteins of the S100 family S100A1, S100A6, S100B, S100P and S100A12 in a calcium-dependent manner. Post-translationally, phosphorylated on serine residues. Phosphorylated upon induction by RA or at high calcium concentrations.

It is found in the nucleus. Its subcellular location is the cytoplasm. In terms of biological role, may be involved in calcium-dependent ubiquitination and subsequent proteasomal degradation of target proteins. Probably serves as a molecular bridge in ubiquitin E3 complexes. Participates in the ubiquitin-mediated degradation of beta-catenin (CTNNB1). The sequence is that of Calcyclin-binding protein (CACYBP) from Bos taurus (Bovine).